The following is a 139-amino-acid chain: D-ribose pyranase (139 aa).

His-20 acts as the Proton donor in catalysis. Substrate-binding positions include Asp-28, His-106, and 128 to 130; that span reads YAN.

It belongs to the RbsD / FucU family. RbsD subfamily. Homodecamer.

The protein localises to the cytoplasm. The catalysed reaction is beta-D-ribopyranose = beta-D-ribofuranose. Its pathway is carbohydrate metabolism; D-ribose degradation; D-ribose 5-phosphate from beta-D-ribopyranose: step 1/2. Its function is as follows. Catalyzes the interconversion of beta-pyran and beta-furan forms of D-ribose. In Cronobacter sakazakii (strain ATCC BAA-894) (Enterobacter sakazakii), this protein is D-ribose pyranase.